The chain runs to 354 residues: MSLDRIMNEAISPWMKGDGPDSDIVLSSRIRLARNFKKYQFSTMQNEEEAKQIHELFKKKFIKKPVEPFGEFELLKMNELNPLQRRVLVEKHLISPNLAGTEYGACLLSESEHISIMLNEEDHVRIQCLFSGLQLSEALQSANQIDNWIEEQVEYAFDESLGYITSCPTNVGTGLRASVMIHLPGLVLTKRINRIIQVIQKLGLVVRGIYGEGSEALGNIFQVSNQMTLGKSEEDIIADLKSVIQQIIHQEKTARELIVQNSSIELEDKVYRSYGILANSRLIQSAEAATCLSDVRLGIDLGYIQGISRNILTELMVLTQPGILQQYAGGPLGPEERDYRRATLIRERLRIEQN.

In terms of domain architecture, Phosphagen kinase C-terminal spans 24–254; sequence IVLSSRIRLA…QQIIHQEKTA (231 aa). ATP contacts are provided by residues 27–31, His-92, Arg-125, 176–180, and 207–212; these read SSRIR, RASVM, and RGIYGE. The short motif at 337-342 is the RDXXRA motif of the pArg binding pocket involved in allosteric regulation element; the sequence is RDYRRA.

Belongs to the ATP:guanido phosphotransferase family.

It carries out the reaction L-arginyl-[protein] + ATP = N(omega)-phospho-L-arginyl-[protein] + ADP + H(+). Appears to be allosterically activated by the binding of pArg-containing polypeptides to the pArg-binding pocket localized in the C-terminal domain of McsB. In terms of biological role, catalyzes the specific phosphorylation of arginine residues in a large number of proteins. Is part of the bacterial stress response system. Protein arginine phosphorylation has a physiologically important role and is involved in the regulation of many critical cellular processes, such as protein homeostasis, motility, competence, and stringent and stress responses, by regulating gene expression and protein activity. The protein is Protein-arginine kinase of Bacillus mycoides (strain KBAB4) (Bacillus weihenstephanensis).